We begin with the raw amino-acid sequence, 312 residues long: Ribonuclease Z (312 aa).

7 residues coordinate Zn(2+): H61, H63, D65, H66, H148, D216, and H275. D65 (proton acceptor) is an active-site residue.

This sequence belongs to the RNase Z family. In terms of assembly, homodimer. It depends on Zn(2+) as a cofactor.

It catalyses the reaction Endonucleolytic cleavage of RNA, removing extra 3' nucleotides from tRNA precursor, generating 3' termini of tRNAs. A 3'-hydroxy group is left at the tRNA terminus and a 5'-phosphoryl group is left at the trailer molecule.. In terms of biological role, zinc phosphodiesterase, which displays some tRNA 3'-processing endonuclease activity. Probably involved in tRNA maturation, by removing a 3'-trailer from precursor tRNA. In Clostridium tetani (strain Massachusetts / E88), this protein is Ribonuclease Z.